Consider the following 412-residue polypeptide: CapZ-interacting protein (412 aa).

Disordered stretches follow at residues 1 to 84 and 99 to 412; these read MEER…KSSP and ALLP…DTRM. Over residues 7 to 20 the composition is skewed to polar residues; sequence ETNSNVDSSAQPSV. 8 positions are modified to phosphoserine: Ser68, Ser82, Ser83, Ser105, Ser108, Ser116, Ser120, and Ser123. Position 124 is a phosphothreonine (Thr124). Residues Ser126, Ser127, Ser135, and Ser143 each carry the phosphoserine modification. Residues 159 to 176 are compositionally biased toward basic residues; the sequence is VRTRGSIKRRPPSRRFRR. Ser177, Ser179, and Ser216 each carry phosphoserine. Residues Thr243 and Thr256 each carry the phosphothreonine modification. Over residues 248 to 258 the composition is skewed to basic and acidic residues; it reads EKPEELVRTPE. The residue at position 297 (Ser297) is a Phosphoserine. Basic and acidic residues-rich tracts occupy residues 298–312 and 319–330; these read PREE…DTGK and SEERVADEDRLG. Ser333 and Ser401 each carry phosphoserine.

In terms of assembly, interacts with CAPZA2 and CAPZB. Dephosphorylation results in its dissociation from CAPZA2.

Its function is as follows. Stress-induced phosphorylation of CAPZIP may regulate the ability of F-actin-capping protein to remodel actin filament assembly. In Mus musculus (Mouse), this protein is CapZ-interacting protein (Rcsd1).